Here is a 935-residue protein sequence, read N- to C-terminus: Dual 3',5'-cyclic-AMP and -GMP phosphodiesterase 11A (935 aa).

The segment at 41–125 (RHSSGQGASD…ASQKELRKSF (85 aa)) is disordered. Low complexity predominate over residues 54 to 69 (ALAGASSLAQSSARGS). 3 positions are modified to phosphoserine: serine 162, serine 163, and serine 239. GAF domains are found at residues 217-370 (DLTS…GIAI) and 402-558 (DLEK…GLGI). Serine 424 lines the 3',5'-cyclic GMP pocket. The PDEase domain occupies 588–912 (SKAEVDKFKA…RKWEELHQKR (325 aa)). Histidine 664 serves as the catalytic Proton donor. A divalent metal cation-binding residues include histidine 668, histidine 704, aspartate 705, and aspartate 816. The disordered stretch occupies residues 915–935 (VSAASPVPSSPSPAVAGEDRL).

The protein belongs to the cyclic nucleotide phosphodiesterase family. A divalent metal cation serves as cofactor. In terms of tissue distribution, isoform 1 is expressed in brain, heart, kidney and liver, but not in prostate. Isoform 2 is specifically expressed in testis. Isoform 3 is expressed in various tissues including brain, lung, skeletal muscle, spleen, testis and prostate.

The protein localises to the cytoplasm. Its subcellular location is the cytosol. The enzyme catalyses 3',5'-cyclic GMP + H2O = GMP + H(+). The catalysed reaction is 3',5'-cyclic AMP + H2O = AMP + H(+). Its activity is regulated as follows. Inhibited by 3-isobutyl-1-methylxanthine (IBMX), zaprinast and dipyridamole. cGMP acts as an allosteric activator. In terms of biological role, plays a role in signal transduction by regulating the intracellular concentration of cyclic nucleotides cAMP and cGMP. Catalyzes the hydrolysis of both cAMP and cGMP to 5'-AMP and 5'-GMP, respectively. This Rattus norvegicus (Rat) protein is Dual 3',5'-cyclic-AMP and -GMP phosphodiesterase 11A.